We begin with the raw amino-acid sequence, 552 residues long: MTDRFRITLAQLNPTVGALAANAEKAMAAWQAGRAAGADLVALPEMFLTGYQTQDLVLKPAFLRDAMAAMAALAAQVVDGPALGIGGPYVDETGSYNAWWVLKDGRVIARALKHHLPHDDVFDEMRLFDQGPVSDPLRLGPVALGVPVCEDAWHPDVAGALAAAGAEVLMVPNGSPYRRGKLDLRRQVTGARVAETGLPLLYLNMVGGQDDQLFDGASFVLNPDGSVAVQLPAFEEAVVHVDLERGAADWRAVPADIVAPPGDIEQDYRAMVLGLQDYLRKSGFSRVVLGLSGGIDSALVAVIAADALGAGNVHCVMLPSRYTSQGSLDDAADLARRLGARLDTVEIEGPRAAVEGALAHVLAGTAPDVTEENIQSRLRGVILMAISNKFGAMLLTTGNKSEVAVGYCTIYGDMAGGYNPLKDLYKTRVFETCRWRNATHRPWMQAPAGEIIPVAIIDKPPSAELRENQTDQDSLPPYEVLDAILERLVEGDQSVDQIVAAGFDRATVKRIEHLLYISEWKRFQSAPGPRLTTRAFWLDRRYPMVNRWRDQS.

One can recognise a CN hydrolase domain in the interval 5–245 (FRITLAQLNP…EAVVHVDLER (241 aa)). Catalysis depends on glutamate 45, which acts as the Proton acceptor; for glutaminase activity. The active-site For glutaminase activity is lysine 113. The active-site Nucleophile; for glutaminase activity is the cysteine 149. Serine 175 and lysine 181 together coordinate L-glutamine. Residues 275–552 (LQDYLRKSGF…PMVNRWRDQS (278 aa)) are ligase. Position 290-297 (290-297 (GLSGGIDS)) interacts with ATP. Asparagine 373 provides a ligand contact to deamido-NAD(+). Threonine 397 is an ATP binding site. 2 residues coordinate deamido-NAD(+): glutamate 402 and lysine 521.

This sequence in the C-terminal section; belongs to the NAD synthetase family.

It carries out the reaction deamido-NAD(+) + L-glutamine + ATP + H2O = L-glutamate + AMP + diphosphate + NAD(+) + H(+). It participates in cofactor biosynthesis; NAD(+) biosynthesis; NAD(+) from deamido-NAD(+) (L-Gln route): step 1/1. Catalyzes the ATP-dependent amidation of deamido-NAD to form NAD. Uses L-glutamine as a nitrogen source. The protein is Glutamine-dependent NAD(+) synthetase of Rhodobacter capsulatus (Rhodopseudomonas capsulata).